A 732-amino-acid chain; its full sequence is Catalase-peroxidase (732 aa).

A compositionally biased stretch (basic and acidic residues) spans Met1–Gly11. Residues Met1–Arg24 are disordered. Residues Trp97–Tyr219 constitute a cross-link (tryptophyl-tyrosyl-methioninium (Trp-Tyr) (with M-245)). His98 functions as the Proton acceptor in the catalytic mechanism. The tryptophyl-tyrosyl-methioninium (Tyr-Met) (with W-97) cross-link spans Tyr219–Met245. His260 contacts heme b.

Belongs to the peroxidase family. Peroxidase/catalase subfamily. In terms of assembly, homodimer or homotetramer. It depends on heme b as a cofactor. Post-translationally, formation of the three residue Trp-Tyr-Met cross-link is important for the catalase, but not the peroxidase activity of the enzyme.

It carries out the reaction H2O2 + AH2 = A + 2 H2O. It catalyses the reaction 2 H2O2 = O2 + 2 H2O. Bifunctional enzyme with both catalase and broad-spectrum peroxidase activity. This is Catalase-peroxidase from Rhodopseudomonas palustris (strain HaA2).